We begin with the raw amino-acid sequence, 273 residues long: Dermonecrotic toxin LsaSicTox-alphaIB1ai (273 aa).

His-5 is a catalytic residue. 2 residues coordinate Mg(2+): Glu-25 and Asp-27. The active-site Nucleophile is His-41. 2 disulfide bridges follow: Cys-45-Cys-51 and Cys-47-Cys-190. Position 85 (Asp-85) interacts with Mg(2+).

The protein belongs to the arthropod phospholipase D family. Class II subfamily. The cofactor is Mg(2+). Expressed by the venom gland.

The protein resides in the secreted. It carries out the reaction an N-(acyl)-sphingosylphosphocholine = an N-(acyl)-sphingosyl-1,3-cyclic phosphate + choline. The enzyme catalyses an N-(acyl)-sphingosylphosphoethanolamine = an N-(acyl)-sphingosyl-1,3-cyclic phosphate + ethanolamine. The catalysed reaction is a 1-acyl-sn-glycero-3-phosphocholine = a 1-acyl-sn-glycero-2,3-cyclic phosphate + choline. It catalyses the reaction a 1-acyl-sn-glycero-3-phosphoethanolamine = a 1-acyl-sn-glycero-2,3-cyclic phosphate + ethanolamine. Functionally, dermonecrotic toxins cleave the phosphodiester linkage between the phosphate and headgroup of certain phospholipids (sphingolipid and lysolipid substrates), forming an alcohol (often choline) and a cyclic phosphate. This toxin acts on sphingomyelin (SM). It may also act on ceramide phosphoethanolamine (CPE), lysophosphatidylcholine (LPC) and lysophosphatidylethanolamine (LPE), but not on lysophosphatidylserine (LPS), and lysophosphatidylglycerol (LPG). It acts by transphosphatidylation, releasing exclusively cyclic phosphate products as second products. Induces dermonecrosis, hemolysis, increased vascular permeability, edema, inflammatory response, and platelet aggregation. This chain is Dermonecrotic toxin LsaSicTox-alphaIB1ai, found in Loxosceles sabina (Tucson recluse spider).